A 421-amino-acid polypeptide reads, in one-letter code: Histidine--tRNA ligase (421 aa).

This sequence belongs to the class-II aminoacyl-tRNA synthetase family. Homodimer.

It localises to the cytoplasm. The enzyme catalyses tRNA(His) + L-histidine + ATP = L-histidyl-tRNA(His) + AMP + diphosphate + H(+). The chain is Histidine--tRNA ligase from Coxiella burnetii (strain CbuK_Q154) (Coxiella burnetii (strain Q154)).